The following is a 356-amino-acid chain: Chorismate synthase (356 aa).

Residues Arg48 and Arg54 each coordinate NADP(+). Residues Arg125–Ser127, Asn237–Ala238, Gly281, Lys296–Ser300, and Arg322 contribute to the FMN site.

It belongs to the chorismate synthase family. Homotetramer. The cofactor is FMNH2.

The enzyme catalyses 5-O-(1-carboxyvinyl)-3-phosphoshikimate = chorismate + phosphate. Its pathway is metabolic intermediate biosynthesis; chorismate biosynthesis; chorismate from D-erythrose 4-phosphate and phosphoenolpyruvate: step 7/7. Its function is as follows. Catalyzes the anti-1,4-elimination of the C-3 phosphate and the C-6 proR hydrogen from 5-enolpyruvylshikimate-3-phosphate (EPSP) to yield chorismate, which is the branch point compound that serves as the starting substrate for the three terminal pathways of aromatic amino acid biosynthesis. This reaction introduces a second double bond into the aromatic ring system. This chain is Chorismate synthase, found in Novosphingobium aromaticivorans (strain ATCC 700278 / DSM 12444 / CCUG 56034 / CIP 105152 / NBRC 16084 / F199).